Here is a 49-residue protein sequence, read N- to C-terminus: Large ribosomal subunit protein bL36 (49 aa).

This sequence belongs to the bacterial ribosomal protein bL36 family.

This is Large ribosomal subunit protein bL36 from Pseudomonas fluorescens (strain ATCC BAA-477 / NRRL B-23932 / Pf-5).